Here is a 133-residue protein sequence, read N- to C-terminus: Profilin (133 aa).

This sequence belongs to the profilin family. Occurs in many kinds of cells as a complex with monomeric actin in a 1:1 ratio.

It is found in the cytoplasm. The protein resides in the cytoskeleton. Functionally, binds to actin and affects the structure of the cytoskeleton. At high concentrations, profilin prevents the polymerization of actin, whereas it enhances it at low concentrations. By binding to PIP2, it inhibits the formation of IP3 and DG. The protein is Profilin of Helianthus annuus (Common sunflower).